The primary structure comprises 575 residues: Epsin-1 (575 aa).

A 1,2-diacyl-sn-glycero-3-phospho-(1D-myo-inositol-4,5-bisphosphate) contacts are provided by Arg-8, Lys-11, Arg-25, Asn-30, Arg-63, and His-73. The ENTH domain occupies 12–144 (NIVHNYSEAE…RDEDRLREER (133 aa)). Residues 149–186 (KTKEKLAQTATASSAAVGSGPPPEAEQAWPQSSGEEEL) are disordered. A compositionally biased stretch (low complexity) spans 157 to 167 (TATASSAAVGS). UIM domains follow at residues 183 to 202 (EEELQLQLALAMSKEEADQP), 208 to 227 (EDDVQLQLALSLSREEHDKE), and 233 to 252 (GDDLRLQMAIEESKRETGGK). Disordered regions lie at residues 264–283 (FTTPAPPQASDPWGGPASVP) and 293–575 (SDPW…PFLL). Repeat copies occupy residues 274-276 (DPW), 294-296 (DPW), 306-308 (DPW), 319-321 (DPW), 332-334 (DPW), 349-351 (DPW), 367-369 (DPW), and 377-379 (DPW). Residues 274 to 379 (DPWGGPASVP…APAPAFSDPW (106 aa)) form an 8 X 3 AA repeats of D-P-W region. Positions 306-316 (DPWGGAAPTPA) are enriched in low complexity. The segment covering 333-346 (PWGGTPAPAAGEGP) has biased composition (low complexity). Residues 367–379 (DPWAPAPAFSDPW) are compositionally biased toward low complexity. A Phosphoserine modification is found at Ser-382. The [DE]-X(1,2)-F-X-X-[FL]-X-X-X-R motif signature appears at 401 to 410 (DEFSDFDRLR). Ser-418 and Ser-419 each carry phosphoserine. Thr-420 bears the Phosphothreonine mark. Residues Ser-434, Ser-446, and Ser-453 each carry the phosphoserine modification. The segment covering 453 to 467 (SPPPAATPTPTPPTR) has biased composition (pro residues). Thr-459, Thr-463, and Thr-469 each carry phosphothreonine. Ser-472 carries the post-translational modification Phosphoserine. At Thr-493 the chain carries Phosphothreonine. Tandem repeats lie at residues 501–503 (NPF) and 517–519 (NPF). The segment at 501–573 (NPFLPSGAPA…GPPAPNTNPF (73 aa)) is 3 X 3 AA repeats of N-P-F. Arg-533 is modified (omega-N-methylarginine). Residues 556–569 (GLPPMMPPGPPAPN) show a composition bias toward pro residues. The stretch at 571-573 (NPF) is repeat 3.

The protein belongs to the epsin family. As to quaternary structure, monomer. Binds ITSN1. Binds clathrin, ZBTB16/ZNF145, AP2A1 and AP2A2. Binds ubiquitinated proteins. Interacts with RALBP1 in a complex also containing NUMB and TFAP2A during interphase and mitosis. Interacts with AP2B1. Interacts with UBQLN2. Interacts with REPS2; the interaction is direct. Interacts with EPS15; the interaction is direct. Interacts with ENTREP1. In terms of processing, ubiquitinated. Phosphorylated on serine and/or threonine residues in mitotic cells. Phosphorylation reduces interaction with REPS2, AP-2 and the membrane fraction. Depolarization of synaptosomes results in dephosphorylation. As to expression, ubiquitously expressed. Detected in liver, spleen and testis, and weakly in lung and thymus (at protein level).

It is found in the cytoplasm. Its subcellular location is the cell membrane. The protein localises to the nucleus. The protein resides in the membrane. It localises to the clathrin-coated pit. In terms of biological role, binds to membranes enriched in phosphatidylinositol 4,5-bisphosphate (PtdIns(4,5)P2). Modifies membrane curvature and facilitates the formation of clathrin-coated invaginations. Regulates receptor-mediated endocytosis. This chain is Epsin-1 (Epn1), found in Rattus norvegicus (Rat).